The primary structure comprises 862 residues: Eukaryotic translation initiation factor 3 subunit C (862 aa).

The tract at residues 1-81 (MSSRFFYGGG…EEEEKVTVVK (81 aa)) is disordered. The span at 17 to 54 (SSDEEELYSDREEEEKSEEEESSEEEDETSEEEESDEE) shows a compositional bias: acidic residues. Positions 55 to 65 (TGAKKFLKDVA) are enriched in basic and acidic residues. Over residues 66-75 (SDSEEEEEEE) the composition is skewed to acidic residues. Residues 600–774 (FHMHINLELL…NAIVFRKGVE (175 aa)) enclose the PCI domain. A disordered region spans residues 813-862 (RDQGAGARGGRGSGRGGQARGGPRFPGGQQGRRPGGQQFGGGALGGAIKA). Gly residues predominate over residues 818–862 (GARGGRGSGRGGQARGGPRFPGGQQGRRPGGQQFGGGALGGAIKA).

Belongs to the eIF-3 subunit C family. In terms of assembly, component of the eukaryotic translation initiation factor 3 (eIF-3) complex.

Its subcellular location is the cytoplasm. Component of the eukaryotic translation initiation factor 3 (eIF-3) complex, which is involved in protein synthesis of a specialized repertoire of mRNAs and, together with other initiation factors, stimulates binding of mRNA and methionyl-tRNAi to the 40S ribosome. The eIF-3 complex specifically targets and initiates translation of a subset of mRNAs involved in cell proliferation. The sequence is that of Eukaryotic translation initiation factor 3 subunit C (nip1) from Neosartorya fischeri (strain ATCC 1020 / DSM 3700 / CBS 544.65 / FGSC A1164 / JCM 1740 / NRRL 181 / WB 181) (Aspergillus fischerianus).